The sequence spans 170 residues: Glycine cleavage system H protein, mitochondrial (170 aa).

Residues 1–45 (MSLRVVRSVRAVACSLRIALASCPPRPWAPSAAAVRSLRTGSALL) constitute a mitochondrion transit peptide. The region spanning 63–145 (IGTVGISNFA…YEDGWLIKMT (83 aa)) is the Lipoyl-binding domain. The residue at position 104 (K104) is an N6-lipoyllysine.

Belongs to the GcvH family. The glycine cleavage system is composed of four proteins: P (GLDC), T (GCST), L (DLD) and H (GCSH). Interacts with GLDC. (R)-lipoate serves as cofactor.

Its subcellular location is the mitochondrion. The glycine cleavage system catalyzes the degradation of glycine. The H protein (GCSH) shuttles the methylamine group of glycine from the P protein (GLDC) to the T protein (GCST). Has a pivotal role in the lipoylation of enzymes involved in cellular energetics such as the mitochondrial dihydrolipoyllysine-residue acetyltransferase component of pyruvate dehydrogenase complex (DLAT), and the mitochondrial dihydrolipoyllysine-residue succinyltransferase component of 2-oxoglutarate dehydrogenase complex (DLST). This Rattus norvegicus (Rat) protein is Glycine cleavage system H protein, mitochondrial.